Reading from the N-terminus, the 208-residue chain is Small ribosomal subunit protein uS4 (208 aa).

Positions 99 to 165 (RRLDNVVFQL…PRLKEILSSL (67 aa)) constitute an S4 RNA-binding domain.

The protein belongs to the universal ribosomal protein uS4 family. In terms of assembly, part of the 30S ribosomal subunit. Contacts protein S5. The interaction surface between S4 and S5 is involved in control of translational fidelity.

Functionally, one of the primary rRNA binding proteins, it binds directly to 16S rRNA where it nucleates assembly of the body of the 30S subunit. With S5 and S12 plays an important role in translational accuracy. This Desulfitobacterium hafniense (strain Y51) protein is Small ribosomal subunit protein uS4.